Consider the following 189-residue polypeptide: Crossover junction endodeoxyribonuclease RuvC (189 aa).

Residues D7, E68, and D141 contribute to the active site. The Mg(2+) site is built by D7, E68, and D141.

The protein belongs to the RuvC family. Homodimer which binds Holliday junction (HJ) DNA. The HJ becomes 2-fold symmetrical on binding to RuvC with unstacked arms; it has a different conformation from HJ DNA in complex with RuvA. In the full resolvosome a probable DNA-RuvA(4)-RuvB(12)-RuvC(2) complex forms which resolves the HJ. Requires Mg(2+) as cofactor.

Its subcellular location is the cytoplasm. The catalysed reaction is Endonucleolytic cleavage at a junction such as a reciprocal single-stranded crossover between two homologous DNA duplexes (Holliday junction).. The RuvA-RuvB-RuvC complex processes Holliday junction (HJ) DNA during genetic recombination and DNA repair. Endonuclease that resolves HJ intermediates. Cleaves cruciform DNA by making single-stranded nicks across the HJ at symmetrical positions within the homologous arms, yielding a 5'-phosphate and a 3'-hydroxyl group; requires a central core of homology in the junction. The consensus cleavage sequence is 5'-(A/T)TT(C/G)-3'. Cleavage occurs on the 3'-side of the TT dinucleotide at the point of strand exchange. HJ branch migration catalyzed by RuvA-RuvB allows RuvC to scan DNA until it finds its consensus sequence, where it cleaves and resolves the cruciform DNA. The protein is Crossover junction endodeoxyribonuclease RuvC of Nocardia farcinica (strain IFM 10152).